We begin with the raw amino-acid sequence, 398 residues long: Putative isocitrate lyase subunit B (398 aa).

The protein belongs to the isocitrate lyase/PEP mutase superfamily. Isocitrate lyase family. Requires Mg(2+) as cofactor.

The enzyme catalyses D-threo-isocitrate = glyoxylate + succinate. Functionally, together with AceAa, they could catalyze the formation of succinate and glyoxylate from isocitrate. This is Putative isocitrate lyase subunit B (aceAb) from Mycobacterium tuberculosis (strain ATCC 25618 / H37Rv).